The following is a 159-amino-acid chain: Eukaryotic translation initiation factor 5A-1 (159 aa).

Basic and acidic residues predominate over residues 1-12; the sequence is MSDEEHHFESKA. The tract at residues 1-23 is disordered; sequence MSDEEHHFESKADAGASKTYPQQ. A Hypusine modification is found at lysine 52.

The protein belongs to the eIF-5A family. Lys-52 undergoes hypusination, a unique post-translational modification that consists in the addition of a butylamino group from spermidine to lysine side chain, leading to the formation of the unusual amino acid hypusine. eIF-5As are the only known proteins to undergo this modification, which is essential for their function.

Its function is as follows. Translation factor that promotes translation elongation and termination, particularly upon ribosome stalling at specific amino acid sequence contexts. Binds between the exit (E) and peptidyl (P) site of the ribosome and promotes rescue of stalled ribosome: specifically required for efficient translation of polyproline-containing peptides as well as other motifs that stall the ribosome. Acts as a ribosome quality control (RQC) cofactor by joining the RQC complex to facilitate peptidyl transfer during CAT tailing step. The chain is Eukaryotic translation initiation factor 5A-1 from Solanum lycopersicum (Tomato).